The primary structure comprises 61 residues: Weak toxin CM-2 (61 aa).

Cystine bridges form between cysteine 3/cysteine 21, cysteine 14/cysteine 37, cysteine 41/cysteine 53, and cysteine 54/cysteine 59.

The protein belongs to the three-finger toxin family. Short-chain subfamily. Orphan group VI sub-subfamily. In terms of tissue distribution, expressed by the venom gland.

It is found in the secreted. The protein is Weak toxin CM-2 of Naja haje haje (Egyptian cobra).